A 409-amino-acid chain; its full sequence is Putative competence-damage inducible protein (409 aa).

It belongs to the CinA family.

The sequence is that of Putative competence-damage inducible protein from Clostridium botulinum (strain Kyoto / Type A2).